Consider the following 354-residue polypeptide: Ornithine transcarbamylase, mitochondrial (354 aa).

A mitochondrion-targeting transit peptide spans 1–32 (MLFNLRILLNNAAFRNGHNFMVRNFRCGQPLQ). The residue at position 70 (Lys-70) is an N6-acetyllysine; alternate. Lys-70 is modified (N6-succinyllysine; alternate). The residue at position 80 (Lys-80) is an N6-succinyllysine. Position 88 is an N6-acetyllysine; alternate (Lys-88). The residue at position 88 (Lys-88) is an N6-succinyllysine; alternate. 90–93 (STRT) serves as a coordination point for carbamoyl phosphate. The residue at position 133 (Ser-133) is a Phosphoserine. Arg-141 serves as a coordination point for carbamoyl phosphate. Lys-144 is modified (N6-acetyllysine; alternate). Lys-144 is modified (N6-succinyllysine; alternate). Residues His-168 and Gln-171 each contribute to the carbamoyl phosphate site. Asn-199 is a binding site for L-ornithine. 3 positions are modified to N6-acetyllysine; alternate: Lys-221, Lys-231, and Lys-238. N6-succinyllysine; alternate occurs at positions 221, 231, and 238. Lys-243 carries the N6-acetyllysine modification. L-ornithine is bound by residues Asp-263, Ser-267, and Met-268. An N6-succinyllysine mark is found at Lys-274 and Lys-289. Position 292 is an N6-acetyllysine; alternate (Lys-292). Residue Lys-292 is modified to N6-succinyllysine; alternate. Catalysis depends on Cys-303, which acts as the Proton acceptor. Residue 303 to 304 (CL) participates in carbamoyl phosphate binding. Lys-307 is subject to N6-acetyllysine; alternate. Lys-307 is subject to N6-succinyllysine; alternate. Arg-330 contacts carbamoyl phosphate.

Belongs to the aspartate/ornithine carbamoyltransferase superfamily. OTCase family. Homotrimer. In terms of processing, acetylation at Lys-88 negatively regulates ornithine carbamoyltransferase activity in response to nutrient signals. Mainly expressed in liver and intestinal mucosa.

The protein localises to the mitochondrion matrix. The enzyme catalyses carbamoyl phosphate + L-ornithine = L-citrulline + phosphate + H(+). It participates in nitrogen metabolism; urea cycle; L-citrulline from L-ornithine and carbamoyl phosphate: step 1/1. Negatively regulated by lysine acetylation. Functionally, catalyzes the second step of the urea cycle, the condensation of carbamoyl phosphate with L-ornithine to form L-citrulline. The urea cycle ensures the detoxification of ammonia by converting it to urea for excretion. The polypeptide is Ornithine transcarbamylase, mitochondrial (Homo sapiens (Human)).